The sequence spans 156 residues: Protein-export protein SecB (156 aa).

This sequence belongs to the SecB family. As to quaternary structure, homotetramer, a dimer of dimers. One homotetramer interacts with 1 SecA dimer.

The protein localises to the cytoplasm. Its function is as follows. One of the proteins required for the normal export of preproteins out of the cell cytoplasm. It is a molecular chaperone that binds to a subset of precursor proteins, maintaining them in a translocation-competent state. It also specifically binds to its receptor SecA. The chain is Protein-export protein SecB from Yersinia enterocolitica serotype O:8 / biotype 1B (strain NCTC 13174 / 8081).